The sequence spans 130 residues: Inner membrane protein YqjF (130 aa).

Residues 1–5 are Cytoplasmic-facing; the sequence is MKKLE. A helical transmembrane segment spans residues 6–26; the sequence is DVGVLVARILMPILFITAGWG. The Periplasmic portion of the chain corresponds to 27-45; that stretch reads KITGYAGTQQYMEAMGVPG. Residues 46–66 traverse the membrane as a helical segment; sequence FMLPLVILLEFGGGLAILFGF. At 67–70 the chain is on the cytoplasmic side; sequence LTRT. A helical transmembrane segment spans residues 71-91; that stretch reads TALFTAGFTLLTAFLFHSNFA. At 92-101 the chain is on the periplasmic side; that stretch reads EGVNSLMFMK. Residues 102–122 traverse the membrane as a helical segment; it reads NLTISGGFLLLAITGPGAYSI. Topologically, residues 123–130 are cytoplasmic; sequence DRLLNKKW.

The protein belongs to the DoxX family.

The protein resides in the cell inner membrane. This chain is Inner membrane protein YqjF (yqjF), found in Escherichia coli (strain K12).